Consider the following 873-residue polypeptide: Protein SEY1 (873 aa).

The tract at residues 1-20 (MVANGHFAGSADGQHSSSYE) is disordered. The Cytoplasmic portion of the chain corresponds to 1–749 (MVANGHFAGS…KRSAIGGITQ (749 aa)). One can recognise a GB1/RHD3-type G domain in the interval 49 to 307 (GFNYHLISVF…IPADGFAVYA (259 aa)). 59-66 (GSQSTGKS) is a GTP binding site. The stretch at 482–506 (SNYQQELSLYQKDLERTSGQLRRDE) forms a coiled coil. The disordered stretch occupies residues 677–703 (DKWIGHTPSSATPADEEDLTPIGGVDD). Residues 690 to 703 (ADEEDLTPIGGVDD) show a composition bias toward acidic residues. The helical transmembrane segment at 750–770 (VPLYFYGLLFALGWNEILAVL) threads the bilayer. At 771–773 (RNP) the chain is on the lumenal side. Residues 774 to 794 (VYFLLLFVCAIGAYITYQLNL) form a helical membrane-spanning segment. Over 795–873 (WGPIIKMTEA…EDVDDDDDDF (79 aa)) the chain is Cytoplasmic. The disordered stretch occupies residues 828–873 (RQAMAMSGARNATEEHEMSRLSRKPAERGGRKNRADEDVDDDDDDF). Positions 839 to 863 (ATEEHEMSRLSRKPAERGGRKNRAD) are enriched in basic and acidic residues. The segment covering 864-873 (EDVDDDDDDF) has biased composition (acidic residues).

The protein belongs to the TRAFAC class dynamin-like GTPase superfamily. GB1/RHD3 GTPase family. RHD3 subfamily.

The protein localises to the endoplasmic reticulum membrane. Cooperates with the reticulon proteins and tubule-shaping DP1 family proteins to generate and maintain the structure of the tubular endoplasmic reticulum network. Has GTPase activity, which is required for its function in ER organization. The protein is Protein SEY1 of Ajellomyces capsulatus (strain NAm1 / WU24) (Darling's disease fungus).